The primary structure comprises 216 residues: Transmembrane protein 186 (216 aa).

The Mitochondrial matrix portion of the chain corresponds to 1–68 (MAFLLRVVPR…IYRFRAIRAI (68 aa)). The interval 31–52 (GDSKRWVGSRSPHSREKSPGTE) is disordered. Residues 69–91 (GFLSRLKLAQTAVTVVALPPGFY) traverse the membrane as a helical segment. Residues 92–103 (CYSQGLMTLSSL) are Mitochondrial intermembrane-facing. A helical membrane pass occupies residues 104–124 (CLLGGVASFALAMLCWMSHFF). Topologically, residues 125–216 (RRLVGILYVN…GTLATLKNSK (92 aa)) are mitochondrial matrix.

The protein belongs to the TMEM186 family. Part of the mitochondrial complex I assembly/MCIA complex that comprises at least the core subunits TMEM126B, NDUFAF1, ECSIT and ACAD9 and complement subunits such as COA1 and TMEM186. Interacts with MT-ND3.

The protein resides in the mitochondrion inner membrane. Its function is as follows. As part of the MCIA complex, required for efficient assembly of the mitochondrial complex I. The chain is Transmembrane protein 186 from Mus musculus (Mouse).